Consider the following 554-residue polypeptide: Malate synthase 2 (554 aa).

R177 functions as the Proton acceptor in the catalytic mechanism. Catalysis depends on D457, which acts as the Proton donor. The SKL peroxisome targeting motif signature appears at 552 to 554 (SKL).

The protein belongs to the malate synthase family. As to quaternary structure, interacts with PEX9.

It is found in the peroxisome matrix. The enzyme catalyses glyoxylate + acetyl-CoA + H2O = (S)-malate + CoA + H(+). Its function is as follows. Allantoin metabolism-specific malate synthase involved in the recycling the glyoxylate generated during allantoin degradation by the ureidoglycollate (UG) hydrolase reaction. This Saccharomyces cerevisiae (strain ATCC 204508 / S288c) (Baker's yeast) protein is Malate synthase 2.